We begin with the raw amino-acid sequence, 191 residues long: Peptidyl-tRNA hydrolase (191 aa).

TRNA is bound at residue Tyr-16. Catalysis depends on His-21, which acts as the Proton acceptor. Residues Phe-66, Asn-68, and Asn-114 each coordinate tRNA.

It belongs to the PTH family. Monomer.

The protein localises to the cytoplasm. It catalyses the reaction an N-acyl-L-alpha-aminoacyl-tRNA + H2O = an N-acyl-L-amino acid + a tRNA + H(+). In terms of biological role, hydrolyzes ribosome-free peptidyl-tRNAs (with 1 or more amino acids incorporated), which drop off the ribosome during protein synthesis, or as a result of ribosome stalling. Its function is as follows. Catalyzes the release of premature peptidyl moieties from peptidyl-tRNA molecules trapped in stalled 50S ribosomal subunits, and thus maintains levels of free tRNAs and 50S ribosomes. This is Peptidyl-tRNA hydrolase from Geotalea daltonii (strain DSM 22248 / JCM 15807 / FRC-32) (Geobacter daltonii).